A 573-amino-acid polypeptide reads, in one-letter code: NADP-dependent malic enzyme, chloroplastic (573 aa).

Tyrosine 123 serves as the catalytic Proton donor. Arginine 176 contacts NAD(+). Lysine 194 (proton acceptor) is an active-site residue. 3 residues coordinate a divalent metal cation: glutamate 265, aspartate 266, and aspartate 289. Aspartate 289 serves as a coordination point for NAD(+). Residue 318–334 participates in NADP(+) binding; the sequence is LFLGAGEAGTGIAELIA. An NAD(+)-binding site is contributed by asparagine 430.

This sequence belongs to the malic enzymes family. In terms of assembly, homotetramer. Requires Mg(2+) as cofactor. It depends on Mn(2+) as a cofactor.

It localises to the plastid. The protein localises to the chloroplast. It carries out the reaction (S)-malate + NADP(+) = pyruvate + CO2 + NADPH. The catalysed reaction is oxaloacetate + H(+) = pyruvate + CO2. It participates in photosynthesis; C4 acid pathway. Functionally, the chloroplastic ME isoform decarboxylates malate shuttled from neighboring mesophyll cells. The CO(2) released is then refixed by ribulose-bisphosphate carboxylase. This pathway eliminates the photorespiratory loss of CO(2) that occurs in most plants. The sequence is that of NADP-dependent malic enzyme, chloroplastic from Solanum lycopersicum (Tomato).